A 1207-amino-acid polypeptide reads, in one-letter code: Plasma membrane calcium-transporting ATPase 4 (1207 aa).

Over M1–A100 the chain is Cytoplasmic. S13 is modified (phosphoserine). The helical transmembrane segment at L101 to F121 threads the bilayer. The Extracellular portion of the chain corresponds to Y122–A147. Residues G148–F168 form a helical membrane-spanning segment. At N169–L368 the chain is on the cytoplasmic side. The tract at residues E294–D317 is disordered. S328 and S334 each carry phosphoserine. Residues I369–I389 form a helical membrane-spanning segment. The Extracellular portion of the chain corresponds to Q390–K408. The helical transmembrane segment at F409 to V429 threads the bilayer. The Cytoplasmic portion of the chain corresponds to T430–F843. D465 serves as the catalytic 4-aspartylphosphate intermediate. 2 residues coordinate Mg(2+): D785 and D789. A helical membrane pass occupies residues L844–I864. Topologically, residues T865–K871 are extracellular. Residues A872–T892 form a helical membrane-spanning segment. At E893–K918 the chain is on the cytoplasmic side. Residues N919 to E939 traverse the membrane as a helical segment. Residues K940–S957 lie on the Extracellular side of the membrane. A helical transmembrane segment spans residues Q958–N977. Over S978–N994 the chain is Cytoplasmic. A helical membrane pass occupies residues L995 to G1015. Over G1016 to Q1028 the chain is Extracellular. A helical membrane pass occupies residues W1029–I1049. Topologically, residues P1050–V1207 are cytoplasmic. The interval L1086–Q1103 is calmodulin-binding subdomain A. T1102 carries the post-translational modification Phosphothreonine; by PKC. A calmodulin-binding subdomain B region spans residues I1104 to S1113. The interval V1159 to N1181 is disordered. The segment covering G1163–N1181 has biased composition (polar residues).

The protein belongs to the cation transport ATPase (P-type) (TC 3.A.3) family. Type IIB subfamily. In terms of assembly, interacts with PDZD11. Interacts with SLC35G1 and STIM1. Interacts with calmodulin. In terms of tissue distribution, isoform 1 is detected in brain, heart, liver, testis and epididymis. Isoform 2 is detected in brain (at protein level), heart, seminal vesicle and epididymis. There is a shift in expression from isoform 1 to isoform 2 along the length of the epididymis from caput to cauda (at protein level).

The protein resides in the cell membrane. It localises to the cell projection. The protein localises to the cilium. Its subcellular location is the flagellum membrane. The enzyme catalyses Ca(2+)(in) + ATP + H2O = Ca(2+)(out) + ADP + phosphate + H(+). Activated by calcium/calmodulin. Functionally, calcium/calmodulin-regulated and magnesium-dependent enzyme that catalyzes the hydrolysis of ATP coupled with the transport of calcium out of the cell. By regulating sperm cells calcium homeostasis, may play a role in sperm motility. In Bos taurus (Bovine), this protein is Plasma membrane calcium-transporting ATPase 4.